A 290-amino-acid polypeptide reads, in one-letter code: Arylamine N-acetyltransferase, pineal gland isozyme NAT-3 (290 aa).

The active-site Acyl-thioester intermediate is the Cys68. Active-site residues include His107 and Asp122.

This sequence belongs to the arylamine N-acetyltransferase family.

The catalysed reaction is an arylamine + acetyl-CoA = an N-acetylarylamine + CoA. It catalyses the reaction an N-hydroxyarylamine + acetyl-CoA = an N-acetoxyarylamine + CoA. Catalyzes the N- or O-acetylation of various arylamine and heterocyclic amine substrates, and participates in the detoxification of a plethora of hydrazine and arylamine drugs. This Gallus gallus (Chicken) protein is Arylamine N-acetyltransferase, pineal gland isozyme NAT-3.